The primary structure comprises 400 residues: Phosphoglycerate kinase (400 aa).

Substrate is bound by residues 24-26, R39, 62-65, R123, and R156; these read DFN and HLGK. ATP is bound by residues K207, G298, E329, and 356–359; that span reads GGDS.

The protein belongs to the phosphoglycerate kinase family. In terms of assembly, monomer.

It localises to the cytoplasm. The enzyme catalyses (2R)-3-phosphoglycerate + ATP = (2R)-3-phospho-glyceroyl phosphate + ADP. The protein operates within carbohydrate degradation; glycolysis; pyruvate from D-glyceraldehyde 3-phosphate: step 2/5. In Clostridioides difficile (strain 630) (Peptoclostridium difficile), this protein is Phosphoglycerate kinase.